The following is a 359-amino-acid chain: Probable dual-specificity RNA methyltransferase RlmN (359 aa).

The active-site Proton acceptor is the Glu-91. In terms of domain architecture, Radical SAM core spans 97–329 (QHYGHSVCVT…KKNGVNCVVR (233 aa)). Cys-104 and Cys-340 form a disulfide bridge. [4Fe-4S] cluster contacts are provided by Cys-111, Cys-115, and Cys-118. S-adenosyl-L-methionine-binding positions include 163–164 (GE), Ser-195, 218–220 (SLH), and Asn-296. Cys-340 functions as the S-methylcysteine intermediate in the catalytic mechanism.

Belongs to the radical SAM superfamily. RlmN family. It depends on [4Fe-4S] cluster as a cofactor.

The protein resides in the cytoplasm. The enzyme catalyses adenosine(2503) in 23S rRNA + 2 reduced [2Fe-2S]-[ferredoxin] + 2 S-adenosyl-L-methionine = 2-methyladenosine(2503) in 23S rRNA + 5'-deoxyadenosine + L-methionine + 2 oxidized [2Fe-2S]-[ferredoxin] + S-adenosyl-L-homocysteine. The catalysed reaction is adenosine(37) in tRNA + 2 reduced [2Fe-2S]-[ferredoxin] + 2 S-adenosyl-L-methionine = 2-methyladenosine(37) in tRNA + 5'-deoxyadenosine + L-methionine + 2 oxidized [2Fe-2S]-[ferredoxin] + S-adenosyl-L-homocysteine. Functionally, specifically methylates position 2 of adenine 2503 in 23S rRNA and position 2 of adenine 37 in tRNAs. This chain is Probable dual-specificity RNA methyltransferase RlmN, found in Streptococcus pyogenes serotype M2 (strain MGAS10270).